A 323-amino-acid polypeptide reads, in one-letter code: Non-structural protein 9 (323 aa).

The tract at residues Met1–Gly142 is disordered. Residues Ile33–Asp49 show a composition bias toward low complexity. The span at Pro99–Gly115 shows a compositional bias: polar residues.

The protein resides in the host cytoplasm. Constituent of viral factories. In Rice gall dwarf virus (RGDV), this protein is Non-structural protein 9.